A 353-amino-acid polypeptide reads, in one-letter code: Guanine nucleotide-binding protein subunit alpha (353 aa).

The N-myristoyl glycine moiety is linked to residue Gly2. Cys3 carries the S-palmitoyl cysteine lipid modification. The region spanning 32–353 (NEIKMLLLGA…QENLRLCGLI (322 aa)) is the G-alpha domain. Residues 35-48 (KMLLLGAGESGKST) are G1 motif. GTP contacts are provided by Glu43, Ser44, Gly45, Lys46, Ser47, Thr48, Asp150, Leu175, Thr181, Gly203, Asn269, Lys270, Asp272, and Ala325. Ser47 contacts Mg(2+). The interval 173-181 (DVLRSRVKT) is G2 motif. Thr181 provides a ligand contact to Mg(2+). The tract at residues 196–205 (YRMFDVGGQR) is G3 motif. The interval 265–272 (ILFLNKID) is G4 motif. Positions 323–328 (TCATDT) are G5 motif.

This sequence belongs to the G-alpha family. G(q) subfamily. In terms of assembly, g proteins are composed of 3 units; alpha, beta and gamma. The alpha chain contains the guanine nucleotide binding site. Mg(2+) serves as cofactor.

Its function is as follows. Guanine nucleotide-binding proteins (G proteins) are involved as modulators or transducers in various transmembrane signaling systems. Involved in the mating pathway. This chain is Guanine nucleotide-binding protein subunit alpha (CGA1), found in Cochliobolus heterostrophus (strain C4 / ATCC 48331 / race T) (Southern corn leaf blight fungus).